A 350-amino-acid polypeptide reads, in one-letter code: Phosphotriesterase-related protein (350 aa).

A divalent metal cation is bound by residues histidine 22, histidine 24, glutamate 169, histidine 201, histidine 230, and aspartate 298.

Belongs to the metallo-dependent hydrolases superfamily. Phosphotriesterase family. A divalent metal cation serves as cofactor.

In Drosophila erecta (Fruit fly), this protein is Phosphotriesterase-related protein.